Here is an 85-residue protein sequence, read N- to C-terminus: Putative plasmid stability protein y4jJ (85 aa).

The segment covering 66–78 has biased composition (basic and acidic residues); sequence EAEHFNQLRDKTP. Positions 66–85 are disordered; sequence EAEHFNQLRDKTPAEPMSFE.

It to P.syringae pv tomato plasmid stability protein StbC.

Involved in plasmid stability. The polypeptide is Putative plasmid stability protein y4jJ (Sinorhizobium fredii (strain NBRC 101917 / NGR234)).